The chain runs to 338 residues: Tetraacyldisaccharide 4'-kinase (338 aa).

61–68 (TLGGTGKT) provides a ligand contact to ATP.

This sequence belongs to the LpxK family.

The catalysed reaction is a lipid A disaccharide + ATP = a lipid IVA + ADP + H(+). It functions in the pathway glycolipid biosynthesis; lipid IV(A) biosynthesis; lipid IV(A) from (3R)-3-hydroxytetradecanoyl-[acyl-carrier-protein] and UDP-N-acetyl-alpha-D-glucosamine: step 6/6. Functionally, transfers the gamma-phosphate of ATP to the 4'-position of a tetraacyldisaccharide 1-phosphate intermediate (termed DS-1-P) to form tetraacyldisaccharide 1,4'-bis-phosphate (lipid IVA). This chain is Tetraacyldisaccharide 4'-kinase, found in Nitrosococcus oceani (strain ATCC 19707 / BCRC 17464 / JCM 30415 / NCIMB 11848 / C-107).